The primary structure comprises 428 residues: Light-independent protochlorophyllide reductase subunit N (428 aa).

[4Fe-4S] cluster-binding residues include cysteine 30, cysteine 55, and cysteine 116.

Belongs to the BchN/ChlN family. As to quaternary structure, protochlorophyllide reductase is composed of three subunits; BchL, BchN and BchB. Forms a heterotetramer of two BchB and two BchN subunits. [4Fe-4S] cluster is required as a cofactor.

The enzyme catalyses chlorophyllide a + oxidized 2[4Fe-4S]-[ferredoxin] + 2 ADP + 2 phosphate = protochlorophyllide a + reduced 2[4Fe-4S]-[ferredoxin] + 2 ATP + 2 H2O. It functions in the pathway porphyrin-containing compound metabolism; bacteriochlorophyll biosynthesis (light-independent). Its function is as follows. Component of the dark-operative protochlorophyllide reductase (DPOR) that uses Mg-ATP and reduced ferredoxin to reduce ring D of protochlorophyllide (Pchlide) to form chlorophyllide a (Chlide). This reaction is light-independent. The NB-protein (BchN-BchB) is the catalytic component of the complex. This is Light-independent protochlorophyllide reductase subunit N from Bradyrhizobium sp. (strain BTAi1 / ATCC BAA-1182).